The following is a 76-amino-acid chain: MFTMKKSLLFLFFLGTISLSLCEQERGADEDDGGEEVKRGIFSLFKAGAKFFGKNLLKEAGKAGAEHLACKAANQC.

The first 22 residues, 1-22 (MFTMKKSLLFLFFLGTISLSLC), serve as a signal peptide directing secretion. Residues 23 to 37 (EQERGADEDDGGEEV) constitute a propeptide that is removed on maturation. Cysteine 70 and cysteine 76 are joined by a disulfide.

The protein belongs to the frog skin active peptide (FSAP) family. Esculentin subfamily. In terms of tissue distribution, expressed by the skin glands.

The protein localises to the secreted. In terms of biological role, antimicrobial peptide. Active against some Gram-negative and a variety of Gram-positive bacterial strains. Not active against fungi. Shows very weak hemolytic activity against human erythrocytes. This is Esculentin-2SN1 from Sylvirana spinulosa (Fine-spined frog).